Reading from the N-terminus, the 130-residue chain is uncharacterized protein (130 aa).

The helical transmembrane segment at 15-31 (LYLCPAIIRLSSVCTLA) threads the bilayer.

It localises to the membrane. This is an uncharacterized protein from Saccharomyces cerevisiae (strain ATCC 204508 / S288c) (Baker's yeast).